The primary structure comprises 522 residues: Aspartic and glutamic acid-rich protein (522 aa).

The N-terminal stretch at 1–16 is a signal peptide; the sequence is MKVFVYLLVTFSLTNA. Composition is skewed to basic and acidic residues over residues 72 to 81 and 93 to 102; these read YDDFFPKDTS and SRNDDGYDLA. A disordered region spans residues 72–497; that stretch reads YDDFFPKDTS…KSKDAAQGNI (426 aa). The span at 109-125 shows a compositional bias: acidic residues; sequence DDEEAYDDFDEVDDRAD. Residues 142 to 152 show a composition bias toward basic and acidic residues; sequence KLPAEEESKND. Acidic residues-rich tracts occupy residues 153–166, 173–200, 228–261, and 267–283; these read MDEETFEDEPEEDK, FAEDERADEREDDDADFDFNDEEDEDEV, DNEEEYADESDDEAEEDSEETADDFEDDPEDESD, and EVEDESEENYQDDTEEG. Positions 284 to 343 are enriched in basic and acidic residues; that stretch reads SEIKQNDETEEQPEKKFDADKEHEDAPEPLKEKLSDESKARAEDESDKSEDAAKEIKEPE. Residues 319–465 are a coiled coil; it reads DESKARAEDE…KSNLALKRDE (147 aa). Residues 358-374 show a composition bias toward acidic residues; that stretch reads DEAELLDDEAELSDDEA. Basic and acidic residues-rich tracts occupy residues 375-397, 407-453, and 461-491; these read ELSKDEAEQSSDEAEKSEDKAEK, DEAK…EFAK, and LKRDENRPLAKGLRESAAHLRDFPSEKKSKD.

Component of the acid-soluble organic matrix of the aragonitic skeleton (at protein level).

The protein resides in the secreted. The sequence is that of Aspartic and glutamic acid-rich protein from Acropora millepora (Staghorn coral).